A 39-amino-acid chain; its full sequence is Large ribosomal subunit protein bL36 (39 aa).

This sequence belongs to the bacterial ribosomal protein bL36 family.

The protein is Large ribosomal subunit protein bL36 of Levilactobacillus brevis (strain ATCC 367 / BCRC 12310 / CIP 105137 / JCM 1170 / LMG 11437 / NCIMB 947 / NCTC 947) (Lactobacillus brevis).